The chain runs to 484 residues: Probable autolysin PH (484 aa).

One can recognise a Peptidase C51 domain in the interval 5–148 (KNQAEKWFDN…YYDDPMYFIR (144 aa)). One can recognise a MurNAc-LAA domain in the interval 181–363 (IMLVAGHGYN…YSKLIAGAIH (183 aa)). In terms of domain architecture, SH3b spans 402 to 472 (KETGYYTVAN…IATGEVDKAG (71 aa)).

It catalyses the reaction Hydrolyzes the link between N-acetylmuramoyl residues and L-amino acid residues in certain cell-wall glycopeptides.. Has weak lytic activity toward S.aureus cells. Full-length protein has no activity, but fusion of the Peptidase C51 domain to the lysostaphin SH3 cell wall binding domain yields an active chimeric enzyme, suggesting that PH may be functional. This Staphylococcus aureus (strain NCTC 8325 / PS 47) protein is Probable autolysin PH.